The chain runs to 475 residues: UDP-N-acetylmuramate--L-alanine ligase (475 aa).

125 to 131 (GTHGKTT) provides a ligand contact to ATP.

The protein belongs to the MurCDEF family.

Its subcellular location is the cytoplasm. It catalyses the reaction UDP-N-acetyl-alpha-D-muramate + L-alanine + ATP = UDP-N-acetyl-alpha-D-muramoyl-L-alanine + ADP + phosphate + H(+). It participates in cell wall biogenesis; peptidoglycan biosynthesis. In terms of biological role, cell wall formation. This chain is UDP-N-acetylmuramate--L-alanine ligase, found in Haemophilus influenzae (strain PittGG).